Reading from the N-terminus, the 410-residue chain is Translation initiation factor 2 subunit gamma (410 aa).

A tr-type G domain is found at 6 to 203 (QSEVNIGMVG…AIQDFIPTPE (198 aa)). Residues 15–22 (GHVDHGKT) are G1. Residues D18, T22, G43, and S45 each contribute to the Mg(2+) site. 18–23 (DHGKTS) provides a ligand contact to GTP. Residues 43-47 (GISIR) form a G2 region. Zn(2+) is bound by residues C58, C61, C73, and C76. The segment at 90–93 (DAPG) is G3. GTP-binding positions include 146–149 (NKID) and 181–183 (SAH). Residues 146–149 (NKID) form a G4 region. The G5 stretch occupies residues 181 to 183 (SAH).

Belongs to the TRAFAC class translation factor GTPase superfamily. Classic translation factor GTPase family. EIF2G subfamily. Heterotrimer composed of an alpha, a beta and a gamma chain. The cofactor is Mg(2+).

It catalyses the reaction GTP + H2O = GDP + phosphate + H(+). In terms of biological role, eIF-2 functions in the early steps of protein synthesis by forming a ternary complex with GTP and initiator tRNA. This Methanococcus maripaludis (strain DSM 14266 / JCM 13030 / NBRC 101832 / S2 / LL) protein is Translation initiation factor 2 subunit gamma.